A 61-amino-acid chain; its full sequence is U-poneritoxin(01)-Om5b (61 aa).

Positions Met1–Ala23 are cleaved as a signal peptide. Residues Asp24 to Ala41 constitute a propeptide that is removed on maturation. A Glutamine amide modification is found at Gln59.

Belongs to the formicidae venom precursor-01 superfamily. Post-translationally, truncated sequences of this peptide have also been found in the venom. It is possible they have been cleaved in the venom. Expressed by the venom gland.

The protein resides in the secreted. Its function is as follows. Acidic peptide with potent hemolytic activities. It also shows low antimicrobial activities against E.coli (MIC=50uM), as well as histamine-releasing activity (28.3% at 10 uM). Does not have activity against S.aureus, and S.cerevisiae. The sequence is that of U-poneritoxin(01)-Om5b from Odontomachus monticola (Trap-jaw ant).